A 2328-amino-acid chain; its full sequence is Reducing polyketide synthase Preu2 (2328 aa).

Residues 1 to 259 (MMAVHLAVAS…GSNVHVIVES (259 aa)) enclose the Ketosynthase family 3 (KS3) domain. The malonyl-CoA:ACP transacylase (MAT) domain stretch occupies residues 376-696 (IFTGQGAQWP…SGLLKRSSNS (321 aa)). The N-terminal hotdog fold stretch occupies residues 766–899 (NELLGEELSM…GSLTVQFGDD (134 aa)). The tract at residues 766 to 1057 (NELLGEELSM…FCTAPFRMST (292 aa)) is dehydratase (DH) domain. In terms of domain architecture, PKS/mFAS DH spans 766-1059 (NELLGEELSM…TAPFRMSTPE (294 aa)). The Proton acceptor; for dehydratase activity role is filled by His-798. The tract at residues 914 to 1059 (LTELDLDTFY…TAPFRMSTPE (146 aa)) is C-terminal hotdog fold. Asp-969 functions as the Proton donor; for dehydratase activity in the catalytic mechanism. Positions 1198 to 1419 (DGMLTQLYSE…VDERVVSLRD (222 aa)) are methyltransferase (MT) domain. Positions 1932–2111 (CYIIIGTSDL…AASVVHLGHV (180 aa)) are ketoreductase (KR)domain. In terms of domain architecture, Carrier spans 2231–2309 (SSSHDIIRNG…NIVDFAVAHL (79 aa)). Residue Ser-2269 is modified to O-(pantetheine 4'-phosphoryl)serine.

Requires pantetheine 4'-phosphate as cofactor.

Reducing polyketide synthase; part of a gene cluster that mediates the biosynthesis of a yet unidentified natural product. This chain is Reducing polyketide synthase Preu2, found in Preussia isomera (Coprophilous fungus).